The chain runs to 162 residues: UPF0114 protein Sputw3181_3501 (162 aa).

3 helical membrane passes run 15-35, 53-73, and 136-156; these read IMAP…IKFF, LVLV…IVMV, and IMWY…MGYL.

The protein belongs to the UPF0114 family.

The protein localises to the cell membrane. In Shewanella sp. (strain W3-18-1), this protein is UPF0114 protein Sputw3181_3501.